Here is a 361-residue protein sequence, read N- to C-terminus: DNA double-strand break repair protein Mre11 (361 aa).

Mn(2+)-binding residues include Asp7, His9, Asp48, and Asn83. His84 serves as the catalytic Proton donor. Mn(2+) is bound by residues His176, His204, and His206.

The protein belongs to the MRE11/RAD32 family. In terms of assembly, homodimer. Forms a heterotetramer composed of two Mre11 subunits and two Rad50 subunits. Mn(2+) serves as cofactor.

Nuclease activity is regulated by Rad50. Functionally, part of the Rad50/Mre11 complex, which is involved in the early steps of DNA double-strand break (DSB) repair. The complex may facilitate opening of the processed DNA ends to aid in the recruitment of HerA and NurA. Mre11 binds to DSB ends and has both double-stranded 3'-5' exonuclease activity and single-stranded endonuclease activity. This Nanoarchaeum equitans (strain Kin4-M) protein is DNA double-strand break repair protein Mre11.